The sequence spans 184 residues: MSWRSEHIWIELLPGSRKISNFCWAFILFLGSLGFLLVGISSYLGRNLISFFPSQQIIFFPQGIVMSFYGIAGLFISSYLWCTISWNVGSGYDLFDRREGIVCIFRWGFPGRNRRIFLRFLIKDIRSVRIEVKEGIYARRVLYMDIRGQRAIPLTRTDENLTPGEIEKKAAELAYFLRVPIEVF.

Helical transmembrane passes span F22–S42 and I57–S77.

Belongs to the Ycf4 family.

Its subcellular location is the plastid. It localises to the chloroplast thylakoid membrane. Seems to be required for the assembly of the photosystem I complex. The protein is Photosystem I assembly protein Ycf4 of Ipomoea purpurea (Common morning glory).